The chain runs to 294 residues: Mitochondrial substrate carrier family protein ucpB (294 aa).

The Mitochondrial intermembrane segment spans residues 1–10; it reads MTSQESIGIK. Solcar repeat units follow at residues 9-93, 101-187, and 197-288; these read IKFL…IKNY, TNLL…IKHM, and DGLQ…LRKV. Residues 11 to 31 traverse the membrane as a helical segment; that stretch reads FLFGGLSCMGAAVVSNPVDVL. Topologically, residues 32-67 are mitochondrial matrix; the sequence is KTRFQIHGEGIDSKSLGLVNGTIKIIKNEGISAMYK. The chain crosses the membrane as a helical span at residues 68–88; that stretch reads GLTPSLLREATYSTLRMGGYD. The Mitochondrial intermembrane segment spans residues 89-106; it reads VIKNYFIDSNGKTNLLSK. The chain crosses the membrane as a helical span at residues 107–127; the sequence is VTSGALSGALGACITSPTDLI. Residues 128–161 lie on the Mitochondrial matrix side of the membrane; the sequence is KVRMQASSKGVKYDSISSAFKEIIAKEGIKGLWK. Residues 162-182 traverse the membrane as a helical segment; the sequence is GVGPTTQRAALLTASQIPSYD. The Mitochondrial intermembrane segment spans residues 183–192; it reads HIKHMILDHG. The chain crosses the membrane as a helical span at residues 193-213; it reads IIQVDGLQVHIVSSIFAGLIA. The Mitochondrial matrix segment spans residues 214–267; the sequence is SITTSPVDLVKTRIMNQPFDSNGVGLIYKSSYDCFKKTFQSEGISGLYKGFLPN. The helical transmembrane segment at 268–285 threads the bilayer; it reads WFRIGPHTIVTFILYEYL. At 286 to 294 the chain is on the mitochondrial intermembrane side; the sequence is RKVSGIKPI.

Belongs to the mitochondrial carrier (TC 2.A.29) family.

It is found in the mitochondrion inner membrane. In terms of biological role, mitochondrial solute carriers shuttle metabolites, nucleotides, and cofactors through the mitochondrial inner membrane. This chain is Mitochondrial substrate carrier family protein ucpB (ucpB), found in Dictyostelium discoideum (Social amoeba).